Consider the following 254-residue polypeptide: Ferritin, chloroplastic (254 aa).

The N-terminal 48 residues, Met1–Ala48, are a transit peptide targeting the chloroplast. Residues Ser49 to Arg81 are extension peptide (EP). A Ferritin-like diiron domain is found at Gln82–Gly235. Positions 99, 134, 137, 183, and 217 each coordinate Fe cation.

The protein belongs to the ferritin family. As to quaternary structure, oligomer of 24 subunits. There are two types of subunits: L (light) chain and H (heavy) chain. The major chain can be light or heavy, depending on the species and tissue type. The functional molecule forms a roughly spherical shell with a diameter of 12 nm and contains a central cavity into which the insoluble mineral iron core is deposited.

It is found in the plastid. The protein resides in the chloroplast. It carries out the reaction 4 Fe(2+) + O2 + 4 H(+) = 4 Fe(3+) + 2 H2O. Its function is as follows. Stores iron in a soluble, non-toxic, readily available form. Important for iron homeostasis. Has ferroxidase activity. Iron is taken up in the ferrous form and deposited as ferric hydroxides after oxidation. The protein is Ferritin, chloroplastic (PFE) of Phaseolus vulgaris (Kidney bean).